Here is a 382-residue protein sequence, read N- to C-terminus: D-galactonate dehydratase (382 aa).

Position 183 (D183) interacts with Mg(2+). The Proton donor role is filled by H185. Positions 209 and 235 each coordinate Mg(2+). H285 acts as the Proton acceptor in catalysis. The tract at residues 361-382 (NENPPDWRNPVWRHSDGSIAEW) is disordered.

This sequence belongs to the mandelate racemase/muconate lactonizing enzyme family. GalD subfamily. The cofactor is Mg(2+).

The catalysed reaction is D-galactonate = 2-dehydro-3-deoxy-D-galactonate + H2O. The protein operates within carbohydrate acid metabolism; D-galactonate degradation; D-glyceraldehyde 3-phosphate and pyruvate from D-galactonate: step 1/3. Catalyzes the dehydration of D-galactonate to 2-keto-3-deoxy-D-galactonate. This Xanthomonas axonopodis pv. citri (strain 306) protein is D-galactonate dehydratase.